The primary structure comprises 588 residues: Ufm1-specific protease (588 aa).

Catalysis depends on residues Cys-420, Asp-544, and His-546.

This sequence belongs to the peptidase C78 family. In terms of assembly, interacts with odr-4.

It localises to the endoplasmic reticulum membrane. It is found in the cytoplasm. The protein localises to the perinuclear region. Its function is as follows. Thiol protease which recognizes and hydrolyzes the peptide bond at the C-terminal Gly of ufm-1, a ubiquitin-like modifier protein bound to a number of target proteins. Required, with oct-4, for the localization of a subset of 7 transmembrane domain odorant receptors, including odr-10, to the cilia of olfactory neurons AWA and AWC. Operates in aggregation behavior, and responses to oxygen levels. The sequence is that of Ufm1-specific protease from Caenorhabditis briggsae.